Here is a 422-residue protein sequence, read N- to C-terminus: Proline-rich protein 22 (422 aa).

3 disordered regions span residues 1 to 35, 306 to 325, and 363 to 422; these read MQHP…PAPT, LCEV…SADD, and EEQP…ATPH. The segment covering 383 to 400 has biased composition (basic residues); the sequence is GKRKASTAKKGKPGRKAR. A compositionally biased stretch (basic and acidic residues) spans 413 to 422; that stretch reads PREDLGATPH.

This is Proline-rich protein 22 (PRR22) from Homo sapiens (Human).